The primary structure comprises 880 residues: Alanine--tRNA ligase (880 aa).

Residues His568, His572, Cys670, and His674 each contribute to the Zn(2+) site.

Belongs to the class-II aminoacyl-tRNA synthetase family. The cofactor is Zn(2+).

The protein resides in the cytoplasm. The catalysed reaction is tRNA(Ala) + L-alanine + ATP = L-alanyl-tRNA(Ala) + AMP + diphosphate. Its function is as follows. Catalyzes the attachment of alanine to tRNA(Ala) in a two-step reaction: alanine is first activated by ATP to form Ala-AMP and then transferred to the acceptor end of tRNA(Ala). Also edits incorrectly charged Ser-tRNA(Ala) and Gly-tRNA(Ala) via its editing domain. The sequence is that of Alanine--tRNA ligase from Enterococcus faecalis (strain ATCC 700802 / V583).